Reading from the N-terminus, the 97-residue chain is Large ribosomal subunit protein uL23 (97 aa).

It belongs to the universal ribosomal protein uL23 family. Part of the 50S ribosomal subunit. Contacts protein L29, and trigger factor when it is bound to the ribosome.

In terms of biological role, one of the early assembly proteins it binds 23S rRNA. One of the proteins that surrounds the polypeptide exit tunnel on the outside of the ribosome. Forms the main docking site for trigger factor binding to the ribosome. The chain is Large ribosomal subunit protein uL23 from Bartonella henselae (strain ATCC 49882 / DSM 28221 / CCUG 30454 / Houston 1) (Rochalimaea henselae).